The primary structure comprises 199 residues: Dephospho-CoA kinase (199 aa).

Residues 3–199 (RIGLTGGIGS…HCKYLQIAQT (197 aa)) form the DPCK domain. An ATP-binding site is contributed by 11–16 (GSGKST).

This sequence belongs to the CoaE family.

The protein resides in the cytoplasm. The catalysed reaction is 3'-dephospho-CoA + ATP = ADP + CoA + H(+). It functions in the pathway cofactor biosynthesis; coenzyme A biosynthesis; CoA from (R)-pantothenate: step 5/5. In terms of biological role, catalyzes the phosphorylation of the 3'-hydroxyl group of dephosphocoenzyme A to form coenzyme A. The chain is Dephospho-CoA kinase from Coxiella burnetii (strain RSA 493 / Nine Mile phase I).